Here is a 234-residue protein sequence, read N- to C-terminus: uncharacterized protein (234 aa).

One can recognise a tRNA-binding domain in the interval 103-211 (LAKKVPFVVC…SHIKIGKSFL (109 aa)).

This is an uncharacterized protein from Mycoplasma pneumoniae (strain ATCC 29342 / M129 / Subtype 1) (Mycoplasmoides pneumoniae).